The primary structure comprises 1032 residues: uncharacterized protein (1032 aa).

Over 1 to 17 the chain is Cytoplasmic; sequence MYEEIRMKFTDIFIRRP. Residues 18–36 traverse the membrane as a helical segment; sequence VLAVSISLLMIILGLQAIS. Topologically, residues 37-337 are periplasmic; sequence KLAVREYPKM…TIAINSSIHE (301 aa). The helical transmembrane segment at 338–357 threads the bilayer; sequence VIKTIGEATLIVLVVILMFI. Residues 358 to 363 are Cytoplasmic-facing; sequence GSFRAI. The chain crosses the membrane as a helical span at residues 364-383; sequence LIPILAIPISLIGVLMLLQS. The Periplasmic segment spans residues 384–389; it reads FNFSIN. A helical membrane pass occupies residues 390–411; sequence LMTLLALILAIGLVVDDAIVVL. At 412–438 the chain is on the cytoplasmic side; the sequence is ENIDRHIKAGETPFRAAIIGTREIAVP. A helical membrane pass occupies residues 439 to 457; the sequence is VISMTIALIAVYSPMALMG. Over 458–470 the chain is Periplasmic; that stretch reads GITGTLFKEFALT. Residues 471–493 form a helical membrane-spanning segment; the sequence is LAGAVFISGVVALTLSPMMSSKL. The Cytoplasmic portion of the chain corresponds to 494–529; the sequence is LKSNAKPTWMEERVEHTLGKVNRVYEYMLDLVMLNR. A helical membrane pass occupies residues 530-548; that stretch reads KSMLAFAVVIFSTLPFLFN. Residues 549 to 852 lie on the Periplasmic side of the membrane; it reads SLSSELTPNE…ARQLVQEGNA (304 aa). Residues 853–872 traverse the membrane as a helical segment; the sequence is LAVTFALAVIIIFLVLAIQF. Residues 873–878 lie on the Cytoplasmic side of the membrane; the sequence is ESIRDP. The helical transmembrane segment at 879–898 threads the bilayer; the sequence is MVIMISVPLAVSGALVSLNI. At 899–910 the chain is on the periplasmic side; sequence LSFFSIAGTTLN. The chain crosses the membrane as a helical span at residues 911 to 932; the sequence is IYSQVGLITLVGLITKHGILMC. At 933–960 the chain is on the cytoplasmic side; the sequence is EVAKEEQLNHGKTRIEAITHAAKVRLRP. The helical transmembrane segment at 961 to 979 threads the bilayer; that stretch reads ILMTTAAMVAGLIPLLYAT. The Periplasmic segment spans residues 980–992; sequence GAGAVSRFSIGIV. Residues 993–1015 form a helical membrane-spanning segment; that stretch reads IVAGLSIGTIFTLFVLPVVYSYV. Residues 1016 to 1032 lie on the Cytoplasmic side of the membrane; that stretch reads ATEHKPLPVFDENKTTH.

This sequence belongs to the resistance-nodulation-cell division (RND) (TC 2.A.6) family.

It is found in the cell inner membrane. In terms of biological role, could be a drug efflux pump. This is an uncharacterized protein from Haemophilus influenzae (strain ATCC 51907 / DSM 11121 / KW20 / Rd).